We begin with the raw amino-acid sequence, 453 residues long: tRNA modification GTPase MnmE (453 aa).

(6S)-5-formyl-5,6,7,8-tetrahydrofolate is bound by residues Arg22, Glu79, and Lys119. Residues 215 to 376 (GMKVVIAGRP…LKAHLKSLMG (162 aa)) form the TrmE-type G domain. K(+) is bound at residue Asn225. GTP contacts are provided by residues 225 to 230 (NAGKSS), 244 to 250 (TEIAGTT), 269 to 272 (DTAG), and 334 to 337 (NKAD). Ser229 is a binding site for Mg(2+). Residues Thr244, Ile246, and Thr249 each coordinate K(+). Position 250 (Thr250) interacts with Mg(2+). Lys453 lines the (6S)-5-formyl-5,6,7,8-tetrahydrofolate pocket.

It belongs to the TRAFAC class TrmE-Era-EngA-EngB-Septin-like GTPase superfamily. TrmE GTPase family. Homodimer. Heterotetramer of two MnmE and two MnmG subunits. It depends on K(+) as a cofactor.

The protein localises to the cytoplasm. Exhibits a very high intrinsic GTPase hydrolysis rate. Involved in the addition of a carboxymethylaminomethyl (cmnm) group at the wobble position (U34) of certain tRNAs, forming tRNA-cmnm(5)s(2)U34. The protein is tRNA modification GTPase MnmE of Shewanella loihica (strain ATCC BAA-1088 / PV-4).